We begin with the raw amino-acid sequence, 216 residues long: Thiopurine S-methyltransferase (216 aa).

4 residues coordinate S-adenosyl-L-methionine: tryptophan 10, leucine 45, glutamate 66, and arginine 123.

Belongs to the class I-like SAM-binding methyltransferase superfamily. TPMT family.

It is found in the cytoplasm. It catalyses the reaction S-adenosyl-L-methionine + a thiopurine = S-adenosyl-L-homocysteine + a thiopurine S-methylether.. The chain is Thiopurine S-methyltransferase from Pseudomonas entomophila (strain L48).